The primary structure comprises 458 residues: Neuronal acetylcholine receptor subunit beta-3 (458 aa).

A signal peptide spans Met1–Gly21. Residues Phe22–Thr237 lie on the Extracellular side of the membrane. Asn51, Asn138, and Asn166 each carry an N-linked (GlcNAc...) asparagine glycan. Cys153 and Cys167 form a disulfide bridge. A run of 3 helical transmembrane segments spans residues Leu238–Pro258, Leu267–Pro287, and Leu300–Val320. Residues His321–Arg428 lie on the Cytoplasmic side of the membrane. The chain crosses the membrane as a helical span at residues Ile429–Ala449.

This sequence belongs to the ligand-gated ion channel (TC 1.A.9) family. Acetylcholine receptor (TC 1.A.9.1) subfamily. Beta-3/CHRNB3 sub-subfamily. In terms of assembly, neuronal AChR seems to be composed of two different type of subunits: alpha and beta. CHRNB3/beta-3 subunit is only able to form functional nAChRs when co-assembled with another beta subunit. Participates in pentameric assemblies along with CHRNA4/alpha-4 and CHRNB2/beta-2 subunits and with CHRNA6/alpha-6 as well, forming stoichiometries such as (CHRNA3:CHRNB4)2:CHRNB3, (CHRNA4:CHRNB2)2:CHRNB3 or (CHRNA6:CHRNB2)2:CHRNB3.

It localises to the synaptic cell membrane. It is found in the cell membrane. The catalysed reaction is Ca(2+)(in) = Ca(2+)(out). It catalyses the reaction K(+)(in) = K(+)(out). It carries out the reaction Na(+)(in) = Na(+)(out). With respect to regulation, activated by a myriad of ligands such as acetylcholine, cytisine, nicotine, choline and epibatidine. Its function is as follows. Component of neuronal acetylcholine receptors (nAChRs) that function as pentameric, ligand-gated cation channels with high calcium permeability among other activities. nAChRs are excitatory neurotrasnmitter receptors formed by a collection of nAChR subunits known to mediate synaptic transmission in the nervous system and the neuromuscular junction. Each nAchR subunit confers differential attributes to channel properties, including activation, deactivation and desensitization kinetics, pH sensitivity, cation permeability, and binding to allosteric modulators. Has an accessory rather than functional role and is only able to form functional nAChRs when co-assembled with another beta subunit. Participates in pentameric assemblies along with CHRNA3, CHRNA4, CHRNA6, CHRNB2 and CHRNB4. Modulates receptor assembly and increases receptor sensitivity to nicotine when associated with CHRNB2, CHRNA4 and/or CHRNA6 as well as CHRNA3 and CHRNB4. Seems to play a role in nicotine addiction. This Homo sapiens (Human) protein is Neuronal acetylcholine receptor subunit beta-3.